Here is a 238-residue protein sequence, read N- to C-terminus: 15,16-dihydrobiliverdin:ferredoxin oxidoreductase (238 aa).

It belongs to the HY2 family.

The enzyme catalyses 15,16-dihydrobiliverdin + oxidized 2[4Fe-4S]-[ferredoxin] = biliverdin IXalpha + reduced 2[4Fe-4S]-[ferredoxin] + 2 H(+). Catalyzes the two-electron reduction of biliverdin IX-alpha at the C15 methine bridge. In Prochlorococcus marinus (strain NATL1A), this protein is 15,16-dihydrobiliverdin:ferredoxin oxidoreductase.